Reading from the N-terminus, the 352-residue chain is Uroporphyrinogen decarboxylase (352 aa).

Residues 26–30, aspartate 76, tyrosine 153, serine 208, and histidine 323 contribute to the substrate site; that span reads RQAGR.

This sequence belongs to the uroporphyrinogen decarboxylase family. Homodimer.

Its subcellular location is the cytoplasm. It catalyses the reaction uroporphyrinogen III + 4 H(+) = coproporphyrinogen III + 4 CO2. It functions in the pathway porphyrin-containing compound metabolism; protoporphyrin-IX biosynthesis; coproporphyrinogen-III from 5-aminolevulinate: step 4/4. Its function is as follows. Catalyzes the decarboxylation of four acetate groups of uroporphyrinogen-III to yield coproporphyrinogen-III. This Synechococcus sp. (strain CC9902) protein is Uroporphyrinogen decarboxylase.